Reading from the N-terminus, the 390-residue chain is Galactokinase (390 aa).

33–36 is a substrate binding site; it reads EHTD. ATP is bound by residues Ser-67 and 124–130; that span reads GAGLSSS. Mg(2+) is bound by residues Ser-130 and Glu-162. Asp-174 serves as the catalytic Proton acceptor. A substrate-binding site is contributed by Tyr-224.

The protein belongs to the GHMP kinase family. GalK subfamily.

It localises to the cytoplasm. The catalysed reaction is alpha-D-galactose + ATP = alpha-D-galactose 1-phosphate + ADP + H(+). Its pathway is carbohydrate metabolism; galactose metabolism. In terms of biological role, catalyzes the transfer of the gamma-phosphate of ATP to D-galactose to form alpha-D-galactose-1-phosphate (Gal-1-P). The polypeptide is Galactokinase (Bacillus subtilis (strain 168)).